A 1108-amino-acid chain; its full sequence is Folliculin-interacting protein 2 (1108 aa).

One can recognise a uDENN FNIP1/2-type domain in the interval 38–456 (FGLSDIRLLV…TVMPVDHPPI (419 aa)). Disordered stretches follow at residues 89-112 (QESSSSSGSSSSGSSSSHGFGGSL), 209-233 (RTGSNLAHSTPVDMPSRGQNEDRDS), 598-635 (SEGVNTSELGHKPEKNRCKRPEQNSEASSMGFQEAEPD), and 649-671 (QNDQEATQDCSSSPPSCEVPRVR). Over residues 91–106 (SSSSSGSSSSGSSSSH) the composition is skewed to low complexity. A phosphoserine mark is found at serine 212 and serine 217. Residues 464–1034 (TSQSVNMLAK…VSSLLQSILQ (571 aa)) form the cDENN FNIP1/2-type domain. Residues 540-905 (DDQVINGSKI…DEACVLALLE (366 aa)) form an interaction with PRKAA1 region. Positions 606–620 (LGHKPEKNRCKRPEQ) are enriched in basic and acidic residues. Residues 652-663 (QEATQDCSSSPP) are compositionally biased toward polar residues. Serine 720, serine 721, and serine 723 each carry phosphoserine. One can recognise a dDENN FNIP1/2-type domain in the interval 1044-1099 (FCIMHLEDRLQEMYLKSKMLSEYLRGHTRVHVKELSVVLGIESNDLPLLTAIASTH).

The protein belongs to the FNIP family. Homodimer and homomultimer. Heterodimer and heteromultimer with FNIP1. Interacts (via C-terminus) with FLCN (via C-terminus). Phosphorylated FLCN is preferentially bound. Component of the lysosomal folliculin complex (LFC), composed of FLCN, FNIP1 (or FNIP2), RagA/RRAGA or RagB/RRAGB GDP-bound, RagC/RRAGC or RagD/RRAGD GTP-bound, and Ragulator. Interacts with PRKAA1, PRKAB1 and PRKAG1 subunits of 5'-AMP-activated protein kinase. Interacts with HSP70, HSP90AA1, STIP1, PTGES3, CDC37, BRAF, GCR and CDK4. Phosphorylated by AMPK.

The protein resides in the lysosome membrane. It is found in the cytoplasm. Functionally, binding partner of the GTPase-activating protein FLCN: involved in the cellular response to amino acid availability by regulating the non-canonical mTORC1 signaling cascade controlling the MiT/TFE factors TFEB and TFE3. Required to promote FLCN recruitment to lysosomes and interaction with Rag GTPases, leading to activation of the non-canonical mTORC1 signaling. In low-amino acid conditions, component of the lysosomal folliculin complex (LFC) on the membrane of lysosomes, which inhibits the GTPase-activating activity of FLCN, thereby inactivating mTORC1 and promoting nuclear translocation of TFEB and TFE3. Upon amino acid restimulation, disassembly of the LFC complex liberates the GTPase-activating activity of FLCN, leading to activation of mTORC1 and subsequent inactivation of TFEB and TFE3. Together with FLCN, regulates autophagy: following phosphorylation by ULK1, interacts with GABARAP and promotes autophagy. In addition to its role in mTORC1 signaling, also acts as a co-chaperone of HSP90AA1/Hsp90: inhibits the ATPase activity of HSP90AA1/Hsp90, leading to activate both kinase and non-kinase client proteins of HSP90AA1/Hsp90. Acts as a scaffold to load client protein FLCN onto HSP90AA1/Hsp90. Competes with the activating co-chaperone AHSA1 for binding to HSP90AA1, thereby providing a reciprocal regulatory mechanism for chaperoning of client proteins. May play a role in the signal transduction pathway of apoptosis induced by O6-methylguanine-mispaired lesions. The polypeptide is Folliculin-interacting protein 2 (Mus musculus (Mouse)).